Reading from the N-terminus, the 1000-residue chain is uncharacterized protein (1000 aa).

Basic and acidic residues predominate over residues 787 to 809; the sequence is RQYEKLKRQRAKSETERHQERHG. The tract at residues 787-812 is disordered; the sequence is RQYEKLKRQRAKSETERHQERHGKLS.

This is an uncharacterized protein from Picosynechococcus sp. (strain ATCC 27264 / PCC 7002 / PR-6) (Agmenellum quadruplicatum).